A 266-amino-acid chain; its full sequence is Histidinol-phosphatase (266 aa).

4 residues coordinate Mg(2+): Glu69, Asp84, Ile86, and Asp87. Glu69 is a binding site for substrate. Residues 86–89 (IDGT), Arg190, and Asp218 each bind substrate. Position 218 (Asp218) interacts with Mg(2+).

The protein belongs to the inositol monophosphatase superfamily. The cofactor is Mg(2+).

The enzyme catalyses L-histidinol phosphate + H2O = L-histidinol + phosphate. Its pathway is amino-acid biosynthesis; L-histidine biosynthesis; L-histidine from 5-phospho-alpha-D-ribose 1-diphosphate: step 8/9. Catalyzes the dephosphorylation of histidinol-phosphate to histidinol, the direct precursor of histidine. This is Histidinol-phosphatase from Streptomyces coelicolor (strain ATCC BAA-471 / A3(2) / M145).